The chain runs to 49 residues: Small, acid-soluble spore protein O (49 aa).

The interval 1–49 (MGKRKANHTISGMNVASAQGQGTGYNEEFANEPLTPAERQNNKKRKKNQ) is disordered. A compositionally biased stretch (polar residues) spans 8–20 (HTISGMNVASAQG).

It belongs to the SspO family.

The protein localises to the spore core. The protein is Small, acid-soluble spore protein O of Bacillus cereus (strain G9842).